The primary structure comprises 101 residues: NAD(P)H-quinone oxidoreductase subunit 4L, chloroplastic (101 aa).

Helical transmembrane passes span 2 to 22, 32 to 52, and 61 to 81; these read MFELVLFLSVYLFSIGIYGLI, ICLELILNSINLNLVTFSDLF, and IFAIFVIALAAAEAAIGLSIL.

It belongs to the complex I subunit 4L family. NDH is composed of at least 16 different subunits, 5 of which are encoded in the nucleus.

Its subcellular location is the plastid. The protein localises to the chloroplast thylakoid membrane. It catalyses the reaction a plastoquinone + NADH + (n+1) H(+)(in) = a plastoquinol + NAD(+) + n H(+)(out). The enzyme catalyses a plastoquinone + NADPH + (n+1) H(+)(in) = a plastoquinol + NADP(+) + n H(+)(out). NDH shuttles electrons from NAD(P)H:plastoquinone, via FMN and iron-sulfur (Fe-S) centers, to quinones in the photosynthetic chain and possibly in a chloroplast respiratory chain. The immediate electron acceptor for the enzyme in this species is believed to be plastoquinone. Couples the redox reaction to proton translocation, and thus conserves the redox energy in a proton gradient. This chain is NAD(P)H-quinone oxidoreductase subunit 4L, chloroplastic, found in Lolium perenne (Perennial ryegrass).